The following is a 177-amino-acid chain: Large ribosomal subunit protein uL6 (177 aa).

The protein belongs to the universal ribosomal protein uL6 family. In terms of assembly, part of the 50S ribosomal subunit.

Its function is as follows. This protein binds to the 23S rRNA, and is important in its secondary structure. It is located near the subunit interface in the base of the L7/L12 stalk, and near the tRNA binding site of the peptidyltransferase center. This is Large ribosomal subunit protein uL6 from Erythrobacter litoralis (strain HTCC2594).